A 655-amino-acid polypeptide reads, in one-letter code: RalA-binding protein 1-A (655 aa).

The tract at residues 1–153 (MTECFLPPAS…KKSKDLTAAD (153 aa)) is disordered. Positions 52–68 (DILHEPPDIVSEDEKDH) are enriched in basic and acidic residues. An ATP-binding site is contributed by 69 to 74 (GKKKGK). Basic residues-rich tracts occupy residues 69-79 (GKKKGKFKKKE) and 102-118 (KIKR…PSFS). Residues 102-119 (KIKRSKGIHVFKKPSFSK) form a nuclear localization signal region. The segment covering 119–150 (KKKEKDFKIKEKPKEEKHKEDKHKEKKSKDLT) has biased composition (basic and acidic residues). A run of 2 repeats spans residues 133 to 137 (EEKHK) and 138 to 142 (EDKHK). The interval 133–142 (EEKHKEDKHK) is 2 X 5 AA tandem repeats of E-[D/E]-K-H-K. The interval 149–214 (LTAADVVKQW…PLVFRECIDF (66 aa)) is mediates association with membranes and could form transmembrane domains. One can recognise a Rho-GAP domain in the interval 187–383 (IPLIEAAERT…PLRWSNMATM (197 aa)). Residues 398 to 495 (RRQEFLLNCL…LTEQEELVAM (98 aa)) form a mediates interaction with RALA and RALB region. 413-420 (AGVKDLSK) contacts ATP. The tract at residues 494 to 510 (AMEQYLRRQIATEKEEI) is required to maintain nuclear localization. Residues 496 to 655 (EQYLRRQIAT…GKKLSSETLI (160 aa)) form a mediates interaction with REPS1 and REPS2 region. Disordered stretches follow at residues 520–548 (IQSR…EEEL) and 600–655 (LQEE…ETLI). Positions 532–548 (EEYSSESESESEDEEEL) are enriched in acidic residues. The span at 619–630 (NLPETKAPKDQP) shows a compositional bias: basic and acidic residues.

As to quaternary structure, interacts with the active, GTP-bound form of ralB and ralA.

The protein localises to the cell membrane. Its subcellular location is the cytoplasm. The protein resides in the cytosol. It localises to the cytoskeleton. It is found in the spindle pole. The protein localises to the nucleus. Its subcellular location is the mitochondrion. The protein resides in the cell projection. It localises to the lamellipodium. The catalysed reaction is an S-substituted glutathione(in) + ATP + H2O = an S-substituted glutathione(out) + ADP + phosphate + H(+). It carries out the reaction ATP + H2O + xenobioticSide 1 = ADP + phosphate + xenobioticSide 2.. The enzyme catalyses leukotriene C4(in) + ATP + H2O = leukotriene C4(out) + ADP + phosphate + H(+). Multifunctional protein that functions as a downstream effector of ralA and ralB. As a GTPase-activating protein/GAP can inactivate CDC42 and RAC1 by stimulating their GTPase activity. As part of the Ral signaling pathway, may also regulate ligand-dependent EGF and insulin receptors-mediated endocytosis. During mitosis, may act as a scaffold protein in the phosphorylation of EPSIN/EPN1 by the mitotic kinase cyclin B-CDK1, preventing endocytosis during that phase of the cell cycle. During mitosis, also controls mitochondrial fission as an effector of ralA. Recruited to mitochondrion by ralA, acts as a scaffold to foster the mitotic kinase cyclin B-CDK1-mediated phosphorylation and activation of DNM1L. Acts on the cytoskeleton, to regulate pigment distribution and to regulate gastrulation. In terms of biological role, could also function as a primary ATP-dependent active transporter for glutathione conjugates of electrophiles. May also actively catalyze the efflux of a wide range of substrates including xenobiotics like doxorubicin (DOX) contributing to cell multidrug resistance. This Xenopus laevis (African clawed frog) protein is RalA-binding protein 1-A (ralbp1-a).